Reading from the N-terminus, the 30-residue chain is Putative cytochrome bd-II ubiquinol oxidase subunit AppX (30 aa).

The helical transmembrane segment at 4-24 threads the bilayer; the sequence is LLWFVGILLMCSLSTLVLVWL.

It belongs to the cytochrome ubiquinol oxidase subunit X family. As to quaternary structure, able to interact with CydA and CydB upon overexpression.

Its subcellular location is the cell inner membrane. Might be part of cytochrome bd-II oxidase (appB and appC). Able to restore reductant resistance to a cydX deletion mutant upon overexpression. CydX and this protein may have some functional overlap. This Escherichia coli (strain K12) protein is Putative cytochrome bd-II ubiquinol oxidase subunit AppX (appX).